The chain runs to 359 residues: Probable S-adenosylmethionine-dependent methyltransferase At5g38100 (359 aa).

Positions 19, 63, 68, 104, 133, and 134 each coordinate S-adenosyl-L-homocysteine. Mg(2+)-binding residues include Asn-172, Asp-258, and Phe-260.

This sequence belongs to the methyltransferase superfamily. Type-7 methyltransferase family. As to quaternary structure, homodimer. Mg(2+) is required as a cofactor.

This Arabidopsis thaliana (Mouse-ear cress) protein is Probable S-adenosylmethionine-dependent methyltransferase At5g38100.